Consider the following 45-residue polypeptide: DNA replication protein repEB (45 aa).

Functionally, involved in T4 DNA replication. Important for the priming of leading strand DNA synthesis at oriE. Binds to ssDNA. This is DNA replication protein repEB (repEB) from Enterobacteria phage T4 (Bacteriophage T4).